A 250-amino-acid polypeptide reads, in one-letter code: Probable chemoreceptor glutamine deamidase CheD (250 aa).

Belongs to the CheD family.

The enzyme catalyses L-glutaminyl-[protein] + H2O = L-glutamyl-[protein] + NH4(+). In terms of biological role, probably deamidates glutamine residues to glutamate on methyl-accepting chemotaxis receptors (MCPs), playing an important role in chemotaxis. This is Probable chemoreceptor glutamine deamidase CheD from Paraburkholderia xenovorans (strain LB400).